Reading from the N-terminus, the 310-residue chain is Ribosomal RNA small subunit methyltransferase H (310 aa).

Residues 33 to 35 (AGH), Asp53, Phe79, Asp100, and Gln107 contribute to the S-adenosyl-L-methionine site.

The protein belongs to the methyltransferase superfamily. RsmH family.

The protein resides in the cytoplasm. It catalyses the reaction cytidine(1402) in 16S rRNA + S-adenosyl-L-methionine = N(4)-methylcytidine(1402) in 16S rRNA + S-adenosyl-L-homocysteine + H(+). Functionally, specifically methylates the N4 position of cytidine in position 1402 (C1402) of 16S rRNA. The polypeptide is Ribosomal RNA small subunit methyltransferase H (Clostridium botulinum (strain Eklund 17B / Type B)).